Consider the following 219-residue polypeptide: Protein-L-isoaspartate O-methyltransferase (219 aa).

Ser65 is a catalytic residue.

Belongs to the methyltransferase superfamily. L-isoaspartyl/D-aspartyl protein methyltransferase family. Monomer.

It is found in the cytoplasm. The catalysed reaction is [protein]-L-isoaspartate + S-adenosyl-L-methionine = [protein]-L-isoaspartate alpha-methyl ester + S-adenosyl-L-homocysteine. Functionally, catalyzes the methyl esterification of L-isoaspartyl residues in peptides and proteins that result from spontaneous decomposition of normal L-aspartyl and L-asparaginyl residues. It plays a role in the repair and/or degradation of damaged proteins. The sequence is that of Protein-L-isoaspartate O-methyltransferase (pcm) from Pyrococcus furiosus (strain ATCC 43587 / DSM 3638 / JCM 8422 / Vc1).